The sequence spans 764 residues: Ribosomal protein S6 kinase alpha-6 (764 aa).

The disordered stretch occupies residues 1-24 (MLPFAPVEDPWDQEDMEVFGSTSS). The 258-residue stretch at 93–350 (FDLLKVLGQG…VEEVKRHAFF (258 aa)) folds into the Protein kinase 1 domain. ATP contacts are provided by residues 99–107 (LGQGSFGKV) and lysine 125. Aspartate 218 (proton acceptor) is an active-site residue. Residues serine 252, serine 392, and serine 409 each carry the phosphoserine modification. The AGC-kinase C-terminal domain maps to 351–420 (ASIDWNKLYK…VATSIAEEYK (70 aa)). One can recognise a Protein kinase 2 domain in the interval 446-706 (YELKEDIGIG…VLKHPWITQR (261 aa)). ATP is bound by residues 452–460 (IGIGSYSVC) and lysine 475. The Proton acceptor role is filled by aspartate 563. Residue threonine 601 is modified to Phosphothreonine.

This sequence belongs to the protein kinase superfamily. AGC Ser/Thr protein kinase family. S6 kinase subfamily. As to quaternary structure, forms a complex with MAPK3/ERK1 but not with MAPK9 or MAPK14 in serum-starved cells. Requires Mg(2+) as cofactor. In terms of processing, phosphorylated at Ser-252, Ser-392, and Ser-409 in serum-starved cells.

It is found in the cytoplasm. The protein localises to the cytosol. It localises to the nucleus. It catalyses the reaction L-seryl-[protein] + ATP = O-phospho-L-seryl-[protein] + ADP + H(+). It carries out the reaction L-threonyl-[protein] + ATP = O-phospho-L-threonyl-[protein] + ADP + H(+). Constitutively activated by phosphorylation at Ser-252, Ser-392, and Ser-409 in serum-starved cells. Does not require growth factor stimulation for significant kinase activity. In terms of biological role, constitutively active serine/threonine-protein kinase that exhibits growth-factor-independent kinase activity and that may participate in p53/TP53-dependent cell growth arrest signaling and play an inhibitory role during embryogenesis. The polypeptide is Ribosomal protein S6 kinase alpha-6 (Rps6ka6) (Mus musculus (Mouse)).